A 414-amino-acid polypeptide reads, in one-letter code: CCA-adding enzyme (414 aa).

G8 and R11 together coordinate ATP. Residues G8 and R11 each contribute to the CTP site. Positions 21 and 23 each coordinate Mg(2+). 3 residues coordinate ATP: R91, R137, and R140. CTP contacts are provided by R91, R137, and R140.

Belongs to the tRNA nucleotidyltransferase/poly(A) polymerase family. Bacterial CCA-adding enzyme type 2 subfamily. It depends on Mg(2+) as a cofactor.

It carries out the reaction a tRNA precursor + 2 CTP + ATP = a tRNA with a 3' CCA end + 3 diphosphate. The enzyme catalyses a tRNA with a 3' CCA end + 2 CTP + ATP = a tRNA with a 3' CCACCA end + 3 diphosphate. Catalyzes the addition and repair of the essential 3'-terminal CCA sequence in tRNAs without using a nucleic acid template. Adds these three nucleotides in the order of C, C, and A to the tRNA nucleotide-73, using CTP and ATP as substrates and producing inorganic pyrophosphate. tRNA 3'-terminal CCA addition is required both for tRNA processing and repair. Also involved in tRNA surveillance by mediating tandem CCA addition to generate a CCACCA at the 3' terminus of unstable tRNAs. While stable tRNAs receive only 3'-terminal CCA, unstable tRNAs are marked with CCACCA and rapidly degraded. This chain is CCA-adding enzyme, found in Buchnera aphidicola subsp. Acyrthosiphon pisum (strain Tuc7).